Reading from the N-terminus, the 340-residue chain is Guanine nucleotide-binding protein G(I)/G(S)/G(T) subunit beta-1 (340 aa).

At Ser2 the chain carries N-acetylserine. Phosphoserine is present on Ser2. WD repeat units lie at residues 46-94 (RTRR…HAIP), 95-140 (LRSS…RELA), 141-181 (GHTG…TTFT), 182-223 (GHTG…QTFT), 224-267 (GHES…YSHD), 268-309 (NIIC…GVLA), and 310-340 (GHDN…KIWN). Residue His266 is modified to Phosphohistidine.

This sequence belongs to the WD repeat G protein beta family. G proteins are composed of 3 units, alpha, beta and gamma. The heterodimer formed by GNB1 and GNG2 interacts with ARHGEF5. The heterodimer formed by GNB1 and GNG2 interacts with GRK2. Forms a complex with GNAO1 and GNG3. Interacts with ARHGEF18 and RASD2. Forms complexes with TAS2R14 and G-proteins; these complexes play a role in the perception of bitterness. Component of the TAS2R14-GNAI1 complex, consisting of TAS2R14, GNAI1, GNB1 and GNG2. Component of the TAS2R14-GNAT3 complex, consisting of TAS2R14, GNAT3, GNB1 and GNG2. Component of the TAS2R14-GNAS2 complex, consisting of TAS2R14, GNAS2, GNB1 and GNG2. Post-translationally, phosphorylation at His-266 by NDKB contributes to G protein activation by increasing the high energetic phosphate transfer onto GDP.

Functionally, guanine nucleotide-binding proteins (G proteins) are involved as a modulator or transducer in various transmembrane signaling systems. The beta and gamma chains are required for the GTPase activity, for replacement of GDP by GTP, and for G protein-effector interaction. This Bos taurus (Bovine) protein is Guanine nucleotide-binding protein G(I)/G(S)/G(T) subunit beta-1 (GNB1).